The primary structure comprises 96 residues: Protein RnfH (96 aa).

Belongs to the UPF0125 (RnfH) family.

The polypeptide is Protein RnfH (Psychromonas ingrahamii (strain DSM 17664 / CCUG 51855 / 37)).